The chain runs to 421 residues: Testin (421 aa).

The PET domain occupies 92–199 (MILTNPVAAK…GDVKLPREMD (108 aa)). Residues 133–164 (EKQPVAGSEGAQYRKKQLAKQLPAHDQDPSKC) are disordered. Residues 155–164 (PAHDQDPSKC) are compositionally biased toward basic and acidic residues. LIM zinc-binding domains follow at residues 234–297 (YSCY…CDSE), 299–359 (PRCA…NHAV), and 362–421 (QGCH…KMMS).

This sequence belongs to the prickle / espinas / testin family. As to quaternary structure, interacts via LIM domain 1 with ZYX. Interacts (via LIM domain 3) with ENAH and VASP. Interacts with ALKBH4, talin, actin, alpha-actinin, GRIP1 and PXN. Interacts (via LIM domain 2) with ACTL7A (via N-terminus). Heterodimer with ACTL7A; the heterodimer interacts with ENAH to form a heterotrimer.

Its subcellular location is the cytoplasm. The protein localises to the cell junction. The protein resides in the focal adhesion. Scaffold protein that may play a role in cell adhesion, cell spreading and in the reorganization of the actin cytoskeleton. Plays a role in the regulation of cell proliferation. May act as a tumor suppressor. This chain is Testin (TES), found in Neofelis nebulosa (Clouded leopard).